The chain runs to 337 residues: RAD51-associated protein 1 (337 aa).

2 disordered regions span residues 1 to 69 (MVRP…PPKK) and 88 to 337 (LSVK…SQVR). 2 positions are modified to phosphoserine: Ser19 and Ser23. Residues 28-38 (ISSSTPVNKSK) are compositionally biased toward polar residues. The interval 32-50 (TPVNKSKTVPKVLKQDKPK) is interaction with DNA. The segment covering 44 to 69 (LKQDKPKPNLKNLQKEEVLPTEPPKK) has biased composition (basic and acidic residues). A phosphoserine mark is found at Ser103 and Ser107. Residues 105-118 (EKSTDKQGKEKTEN) are compositionally biased toward basic and acidic residues. The short motif at 138–143 (LDKITE) is the SIM motif element. A compositionally biased stretch (acidic residues) spans 190–205 (SESDPDFDESKESDED). Residues 225 to 286 (GEKKERKSKP…PSAESKRPKW (62 aa)) are interaction with DNA. Lys251 participates in a covalent cross-link: Glycyl lysine isopeptide (Lys-Gly) (interchain with G-Cter in SUMO; alternate). Lys251 participates in a covalent cross-link: Glycyl lysine isopeptide (Lys-Gly) (interchain with G-Cter in ubiquitin; alternate). The short motif at 286–289 (WVPP) is the WVPP motif element. Residues 290-304 (AASGSRNSSSNALAG) are compositionally biased toward low complexity. An interaction with RAD51 region spans residues 295-334 (RNSSSNALAGTPAKSPSQSLRLGLSRLAPVKRLHPSATSS). A Phosphoserine modification is found at Ser309.

Monomer; elongated monodisperse monomer. Interacts (via C-terminal region) with RAD51; the interaction is direct. Interacts (via SIM motif) with WDR48/UAF1; WDR48/UAF1 and RAD51AP1 cooperate together to stimulate RAD51-mediated homologous recombination (HR). Interacts (via WVPP motif) with DMC1; the interaction is direct. Interacts with PALB2. Interacts with RAD52. Post-translationally, sumoylation with SUMO2/3 by NSMCE2/MMS21 promotes stabilization, possibly by preventing ubiquitination. Most abundantly expressed in testis. Also expressed in spleen, thymus and bone marrow. Not detected in heart, kidney or liver.

The protein resides in the chromosome. Its subcellular location is the nucleus. The protein localises to the telomere. Its function is as follows. Structure-specific DNA-binding protein involved in DNA repair by promoting RAD51-mediated homologous recombination. Acts by stimulating D-Loop formation by RAD51: specifically enhances joint molecule formation through its structure-specific DNA interaction and its interaction with RAD51. Binds single-stranded DNA (ssDNA), double-stranded DNA (dsDNA) and secondary DNA structures, such as D-loop structures: has a strong preference for branched-DNA structures that are obligatory intermediates during joint molecule formation. Cooperates with WDR48/UAF1 to stimulate RAD51-mediated homologous recombination: both WDR48/UAF1 and RAD51AP1 have coordinated role in DNA-binding during homologous recombination and DNA repair. WDR48/UAF1 and RAD51AP1 also have a coordinated role in DNA-binding to promote USP1-mediated deubiquitination of FANCD2. Also involved in meiosis by promoting DMC1-mediated homologous meiotic recombination. The chain is RAD51-associated protein 1 from Mus musculus (Mouse).